Here is a 462-residue protein sequence, read N- to C-terminus: Fumarate hydratase class II (462 aa).

Residues 97–99 (SGT), 127–130 (HPND), 137–139 (SSN), and T185 each bind substrate. The Proton donor/acceptor role is filled by H186. S316 is an active-site residue. Residues S317 and 322–324 (KVN) each bind substrate.

The protein belongs to the class-II fumarase/aspartase family. Fumarase subfamily. As to quaternary structure, homotetramer.

The protein resides in the cytoplasm. It catalyses the reaction (S)-malate = fumarate + H2O. The protein operates within carbohydrate metabolism; tricarboxylic acid cycle; (S)-malate from fumarate: step 1/1. In terms of biological role, involved in the TCA cycle. Catalyzes the stereospecific interconversion of fumarate to L-malate. In Halalkalibacterium halodurans (strain ATCC BAA-125 / DSM 18197 / FERM 7344 / JCM 9153 / C-125) (Bacillus halodurans), this protein is Fumarate hydratase class II.